A 94-amino-acid polypeptide reads, in one-letter code: PqqA binding protein (94 aa).

It belongs to the PqqD family. As to quaternary structure, monomer. Interacts with PqqE.

The protein operates within cofactor biosynthesis; pyrroloquinoline quinone biosynthesis. In terms of biological role, functions as a PqqA binding protein and presents PqqA to PqqE, in the pyrroloquinoline quinone (PQQ) biosynthetic pathway. This chain is PqqA binding protein, found in Pseudomonas savastanoi pv. phaseolicola (strain 1448A / Race 6) (Pseudomonas syringae pv. phaseolicola (strain 1448A / Race 6)).